The following is a 154-amino-acid chain: Myoglobin (154 aa).

The region spanning G2–K148 is the Globin domain. Phosphoserine is present on S4. H65 contacts nitrite. Residue H65 participates in O2 binding. T68 carries the post-translational modification Phosphothreonine. A heme b-binding site is contributed by H94.

It belongs to the globin family. As to quaternary structure, monomeric.

It localises to the cytoplasm. The protein localises to the sarcoplasm. The catalysed reaction is Fe(III)-heme b-[protein] + nitric oxide + H2O = Fe(II)-heme b-[protein] + nitrite + 2 H(+). It carries out the reaction H2O2 + AH2 = A + 2 H2O. In terms of biological role, monomeric heme protein which primary function is to store oxygen and facilitate its diffusion within muscle tissues. Reversibly binds oxygen through a pentacoordinated heme iron and enables its timely and efficient release as needed during periods of heightened demand. Depending on the oxidative conditions of tissues and cells, and in addition to its ability to bind oxygen, it also has a nitrite reductase activity whereby it regulates the production of bioactive nitric oxide. Under stress conditions, like hypoxia and anoxia, it also protects cells against reactive oxygen species thanks to its pseudoperoxidase activity. In Castor fiber (Eurasian beaver), this protein is Myoglobin (MB).